A 141-amino-acid polypeptide reads, in one-letter code: Nucleoside triphosphatase NudI (141 aa).

One can recognise a Nudix hydrolase domain in the interval 1–141 (MRQRTIVCPL…RKTLRLKGLL (141 aa)). A Nudix box motif is present at residues 38 to 59 (GGVESGERIEEALRREIREELG).

The protein belongs to the Nudix hydrolase family. NudI subfamily. In terms of assembly, monomer. Mg(2+) serves as cofactor.

The enzyme catalyses a ribonucleoside 5'-triphosphate + H2O = a ribonucleoside 5'-phosphate + diphosphate + H(+). The catalysed reaction is a 2'-deoxyribonucleoside 5'-triphosphate + H2O = a 2'-deoxyribonucleoside 5'-phosphate + diphosphate + H(+). It carries out the reaction dUTP + H2O = dUMP + diphosphate + H(+). It catalyses the reaction dTTP + H2O = dTMP + diphosphate + H(+). The enzyme catalyses dCTP + H2O = dCMP + diphosphate + H(+). In terms of biological role, catalyzes the hydrolysis of nucleoside triphosphates, with a preference for pyrimidine deoxynucleoside triphosphates (dUTP, dTTP and dCTP). This is Nucleoside triphosphatase NudI from Shigella flexneri serotype 5b (strain 8401).